The following is a 174-amino-acid chain: Guided entry of tail-anchored proteins factor 1 (174 aa).

Residues 1–8 (MSASETDR) lie on the Lumenal side of the membrane. A helical membrane pass occupies residues 9–29 (WAWLLVLCFVFGCNVLRILLP). Over 30–99 (TLSSFISRVL…VKARTAQLAK (70 aa)) the chain is Cytoplasmic. Residues 39 to 94 (LQKDAEQESQMRAEIQSMKQELSTVNMMDEFARYARLERKINKMTDKLKTHVKART) are a coiled coil. An interaction with GET3/TRC40 region spans residues 39–97 (LQKDAEQESQMRAEIQSMKQELSTVNMMDEFARYARLERKINKMTDKLKTHVKARTAQL). The helical transmembrane segment at 100-120 (IKWFISVAFYVLQAALMISLI) threads the bilayer. At 121–148 (WKYYSVPVAVVPSKWITPLDRLVAFPTR) the chain is on the lumenal side. A helical transmembrane segment spans residues 149–169 (VAGGIGVTCWILVCNKVVAII). The Cytoplasmic portion of the chain corresponds to 170–174 (LHPFS).

It belongs to the WRB/GET1 family. In terms of assembly, component of the Golgi to ER traffic (GET) complex, which is composed of GET1, CAMLG/GET2 and GET3. Within the complex, GET1 and CAMLG form a heterotetramer which is stabilized by phosphatidylinositol binding and which binds to the GET3 homodimer. Interacts with CAMLG/GET2 (via C-terminus). GET3 shows a higher affinity for CAMLG than for GET1.

It localises to the endoplasmic reticulum membrane. In terms of biological role, required for the post-translational delivery of tail-anchored (TA) proteins to the endoplasmic reticulum. Together with CAMLG/GET2, acts as a membrane receptor for soluble GET3/TRC40, which recognizes and selectively binds the transmembrane domain of TA proteins in the cytosol. Required to ensure correct topology and ER insertion of CAMLG. The chain is Guided entry of tail-anchored proteins factor 1 from Rattus norvegicus (Rat).